Consider the following 274-residue polypeptide: Dermonecrotic toxin LarSicTox-alphaIB2bii (274 aa).

His3 is a catalytic residue. Residues Glu23 and Asp25 each coordinate Mg(2+). The active-site Nucleophile is His39. Disulfide bonds link Cys43-Cys49 and Cys45-Cys188. A Mg(2+)-binding site is contributed by Asp83. Asn251 carries an N-linked (GlcNAc...) asparagine glycan.

This sequence belongs to the arthropod phospholipase D family. Class II subfamily. Mg(2+) is required as a cofactor. Expressed by the venom gland.

It localises to the secreted. It catalyses the reaction an N-(acyl)-sphingosylphosphocholine = an N-(acyl)-sphingosyl-1,3-cyclic phosphate + choline. The catalysed reaction is an N-(acyl)-sphingosylphosphoethanolamine = an N-(acyl)-sphingosyl-1,3-cyclic phosphate + ethanolamine. The enzyme catalyses a 1-acyl-sn-glycero-3-phosphocholine = a 1-acyl-sn-glycero-2,3-cyclic phosphate + choline. It carries out the reaction a 1-acyl-sn-glycero-3-phosphoethanolamine = a 1-acyl-sn-glycero-2,3-cyclic phosphate + ethanolamine. Dermonecrotic toxins cleave the phosphodiester linkage between the phosphate and headgroup of certain phospholipids (sphingolipid and lysolipid substrates), forming an alcohol (often choline) and a cyclic phosphate. This toxin acts on sphingomyelin (SM). It may also act on ceramide phosphoethanolamine (CPE), lysophosphatidylcholine (LPC) and lysophosphatidylethanolamine (LPE), but not on lysophosphatidylserine (LPS), and lysophosphatidylglycerol (LPG). It acts by transphosphatidylation, releasing exclusively cyclic phosphate products as second products. Induces dermonecrosis, hemolysis, increased vascular permeability, edema, inflammatory response, and platelet aggregation. In Loxosceles arizonica (Arizona brown spider), this protein is Dermonecrotic toxin LarSicTox-alphaIB2bii.